Consider the following 465-residue polypeptide: GTPase Der (465 aa).

EngA-type G domains follow at residues 3–167 and 179–352; these read PLVA…PEEG and VRIA…ASAT. Residues 9–16, 57–61, 119–122, 185–192, 232–236, and 297–300 contribute to the GTP site; these read GRPNVGKS, DTGGI, NKID, DTAGL, and NKWD. The KH-like domain maps to 353 to 437; sequence HEFSTSEVNQ…PVCFIFREGA (85 aa).

It belongs to the TRAFAC class TrmE-Era-EngA-EngB-Septin-like GTPase superfamily. EngA (Der) GTPase family. Associates with the 50S ribosomal subunit.

In terms of biological role, GTPase that plays an essential role in the late steps of ribosome biogenesis. The sequence is that of GTPase Der from Xanthomonas oryzae pv. oryzae (strain MAFF 311018).